The following is a 60-amino-acid chain: DNA-directed RNA polymerase subunit Rpo6 (60 aa).

Belongs to the archaeal Rpo6/eukaryotic RPB6 RNA polymerase subunit family. Part of the RNA polymerase complex.

The protein resides in the cytoplasm. It catalyses the reaction RNA(n) + a ribonucleoside 5'-triphosphate = RNA(n+1) + diphosphate. DNA-dependent RNA polymerase (RNAP) catalyzes the transcription of DNA into RNA using the four ribonucleoside triphosphates as substrates. The polypeptide is DNA-directed RNA polymerase subunit Rpo6 (Methanosarcina acetivorans (strain ATCC 35395 / DSM 2834 / JCM 12185 / C2A)).